We begin with the raw amino-acid sequence, 360 residues long: MASATAPAAAVPTLASPLEQLRHLAEELRLLLPRVRVGEAQETTEEFNREMFWRRLNEAAVTVSREATTLTIVFSQLPLPSPQETQKFCEQVHAAIKAFIAVYYLLPKDQGITLRKLVRGATLDIVDGMAQLMEVLSVTPTQSPENNDLISYNSVWVACQQMPQIPRDNKAAALLMLTKNVDFVKDAHEEMEQAVEECDPYSGLLNDTEENNSDNHNHEDDVLGFPSNQDLYWSEDDQELIIPCLALVRASKACLKKIRMLVAENGKKDQVAQLDDIVDISDEISPSVDDLALSIYPPMCHLTVRINSAKLVSVLKKALEITKASHVTPQPEDSWIPLLINAIDHCMNRIKELTQSELEL.

Alanine 2 bears the N-acetylalanine mark. 2 interaction with TCF3 regions span residues 2–184 and 150–360; these read ASAT…VDFV and ISYN…ELEL. Interaction with RPLP0 regions lie at residues 2–190 and 240–360; these read ASAT…AHEE and LIIP…ELEL. Positions 2–208 are required for interaction with CCND1; the sequence is ASATAPAAAV…DPYSGLLNDT (207 aa).

It belongs to the CCNDBP1 family. As to quaternary structure, interacts with CCND1 and GRAP2. May also interact with COPS5, RPLP0, SIRT6, SYF2 and TCF3. Phosphorylated. Ubiquitously expressed. Expression is down-regulated in a variety of tumor types including breast, colon, prostate and rectal tumors, and is up-regulated in certain hepatic carcinomas.

The protein localises to the cytoplasm. It localises to the nucleus. Its function is as follows. May negatively regulate cell cycle progression. May act at least in part via inhibition of the cyclin-D1/CDK4 complex, thereby preventing phosphorylation of RB1 and blocking E2F-dependent transcription. The protein is Cyclin-D1-binding protein 1 (CCNDBP1) of Homo sapiens (Human).